A 491-amino-acid chain; its full sequence is Ribulose-1,5 bisphosphate carboxylase/oxygenase large subunit N-methyltransferase, chloroplastic (491 aa).

The SET domain maps to 67-291 (EGVVTTKTPV…AGDQLFIQYD (225 aa)).

The protein belongs to the class V-like SAM-binding methyltransferase superfamily. Plant protein-lysine LSMT methyltransferase family.

The protein localises to the plastid. The protein resides in the chloroplast. It catalyses the reaction L-lysyl-[ribulose-1,5-bisphosphate carboxylase] + 3 S-adenosyl-L-methionine = N(6),N(6),N(6)-trimethyl-L-lysyl-[ribulose-1,5-bisphosphate carboxylase] + 3 S-adenosyl-L-homocysteine + 3 H(+). Functionally, methylates 'Lys-14' of the large subunit of RuBisCO. In Nicotiana tabacum (Common tobacco), this protein is Ribulose-1,5 bisphosphate carboxylase/oxygenase large subunit N-methyltransferase, chloroplastic (RBCMT).